We begin with the raw amino-acid sequence, 177 residues long: Photosystem I assembly protein Ycf4 (177 aa).

2 helical membrane passes run 20–40 (VALLVSIGGVGFLLTSASSYF) and 60–80 (LVMGAYGVGAVLLSSYLWAVI).

This sequence belongs to the Ycf4 family.

The protein resides in the cellular thylakoid membrane. Its function is as follows. Seems to be required for the assembly of the photosystem I complex. The chain is Photosystem I assembly protein Ycf4 from Synechococcus sp. (strain RCC307).